We begin with the raw amino-acid sequence, 356 residues long: S-adenosylmethionine:tRNA ribosyltransferase-isomerase (356 aa).

Belongs to the QueA family. Monomer.

The protein resides in the cytoplasm. It carries out the reaction 7-aminomethyl-7-carbaguanosine(34) in tRNA + S-adenosyl-L-methionine = epoxyqueuosine(34) in tRNA + adenine + L-methionine + 2 H(+). Its pathway is tRNA modification; tRNA-queuosine biosynthesis. Its function is as follows. Transfers and isomerizes the ribose moiety from AdoMet to the 7-aminomethyl group of 7-deazaguanine (preQ1-tRNA) to give epoxyqueuosine (oQ-tRNA). In Yersinia pseudotuberculosis serotype O:3 (strain YPIII), this protein is S-adenosylmethionine:tRNA ribosyltransferase-isomerase.